The sequence spans 201 residues: uncharacterized protein (201 aa).

The signal sequence occupies residues 1–28 (MMTFKNLRYGLSSSVVLAASLFSVLSYA).

It belongs to the fimbrial protein family.

It is found in the fimbrium. Its function is as follows. Part of the yadCKLM-htrE-yadVN fimbrial operon. Could contribute to adhesion to various surfaces in specific environmental niches. This is an uncharacterized protein from Escherichia coli (strain K12).